Reading from the N-terminus, the 94-residue chain is PqqA binding protein (94 aa).

The protein belongs to the PqqD family. As to quaternary structure, monomer. Interacts with PqqE.

It participates in cofactor biosynthesis; pyrroloquinoline quinone biosynthesis. Its function is as follows. Functions as a PqqA binding protein and presents PqqA to PqqE, in the pyrroloquinoline quinone (PQQ) biosynthetic pathway. This chain is PqqA binding protein, found in Acinetobacter baumannii (strain AB307-0294).